Here is a 158-residue protein sequence, read N- to C-terminus: SsrA-binding protein (158 aa).

Belongs to the SmpB family.

The protein localises to the cytoplasm. Required for rescue of stalled ribosomes mediated by trans-translation. Binds to transfer-messenger RNA (tmRNA), required for stable association of tmRNA with ribosomes. tmRNA and SmpB together mimic tRNA shape, replacing the anticodon stem-loop with SmpB. tmRNA is encoded by the ssrA gene; the 2 termini fold to resemble tRNA(Ala) and it encodes a 'tag peptide', a short internal open reading frame. During trans-translation Ala-aminoacylated tmRNA acts like a tRNA, entering the A-site of stalled ribosomes, displacing the stalled mRNA. The ribosome then switches to translate the ORF on the tmRNA; the nascent peptide is terminated with the 'tag peptide' encoded by the tmRNA and targeted for degradation. The ribosome is freed to recommence translation, which seems to be the essential function of trans-translation. The protein is SsrA-binding protein of Bartonella tribocorum (strain CIP 105476 / IBS 506).